The following is a 71-amino-acid chain: Defensin-like protein 124 (71 aa).

The signal sequence occupies residues M1–G25. 4 disulfides stabilise this stretch: C28–C71, C40–C60, C45–C65, and C49–C67.

It belongs to the DEFL family.

It localises to the secreted. This Arabidopsis thaliana (Mouse-ear cress) protein is Defensin-like protein 124 (LCR16).